The following is a 1036-amino-acid chain: Vacuolar basic amino acid transporter VSB1 (1036 aa).

The Vacuolar portion of the chain corresponds to 1–213 (MGRTIRRRRS…SKFAHYLPAA (213 aa)). Phosphoserine is present on residues Ser42 and Ser127. A Phosphothreonine modification is found at Thr130. Phosphoserine occurs at positions 140, 144, 149, 152, and 153. Residues 214–234 (VLGLLLNILDALSYGMIIFPI) form a helical membrane-spanning segment. The Cytoplasmic segment spans residues 235–236 (TE). The chain crosses the membrane as a helical span at residues 237–257 (PVFSHLGPTGISMFYISTIIS). At 258–269 (QAVYSGGWSSFP) the chain is on the vacuolar side. A helical membrane pass occupies residues 270–290 (SGIGSEMIEITPFYHTMALAI). The Cytoplasmic segment spans residues 291 to 300 (KEALAGNDDE). Residues 301 to 321 (IITTTIFCYVISSMLTGVVFY) traverse the membrane as a helical segment. Over 322-338 (ALGKLRLGKIVGFFPRH) the chain is Vacuolar. The helical transmembrane segment at 339 to 359 (ILIGCIGGVGYFLIITGIEVT) threads the bilayer. The Cytoplasmic segment spans residues 360 to 375 (TRVAKFEYSWPFFSGL). Residues 376 to 396 (FTDYDTLAKWLLPVLLTVVLI) traverse the membrane as a helical segment. Over 397 to 405 (GTQRYFKNS) the chain is Vacuolar. The helical transmembrane segment at 406 to 426 (LVLPSFYILTLVLFHFIVAII) threads the bilayer. Over 427–473 (PTLSLDALRQAGWIFPIANSDSKWYDHYRLFNVHKVHWSLVLQQIPT) the chain is Cytoplasmic. The helical transmembrane segment at 474-494 (MMALTFFGILHVPINVPALAM) threads the bilayer. The Vacuolar segment spans residues 495–515 (SLQMDKYDVDRELIAHGYSNF). Residues 516–536 (FSGLLGSVQNYLVYTNSVLFI) traverse the membrane as a helical segment. Over 537–546 (RAGADSPFAG) the chain is Cytoplasmic. Residues 547 to 567 (FLLIALTICIMIIGPVIISFI) form a helical membrane-spanning segment. Residue Pro568 is a topological domain, vacuolar. A helical membrane pass occupies residues 569 to 589 (ICIVGSLIFLLGYELLVEALV). Over 590–604 (DTWNKLNRFEYLTVV) the chain is Cytoplasmic. The helical transmembrane segment at 605–625 (IIVFTMGIFDFVLGIIVGILI) threads the bilayer. Residues 626–664 (ACFSFLVDSTKLQTINGEYNGNVARSTVYRDYVQTKFLD) lie on the Vacuolar side of the membrane. One can recognise an STAS domain in the interval 660–781 (TKFLDGIGEQ…ADLNSALEWC (122 aa)). A helical membrane pass occupies residues 665 to 685 (GIGEQIYVLKLQNLLFFGTII). Residues 686–1036 (SIEEKIERLL…ELLGYTLVSA (351 aa)) are Cytoplasmic-facing. A Phosphoserine modification is found at Ser842. Thr847 is modified (phosphothreonine).

It localises to the vacuole membrane. Its function is as follows. Amino acid transporter involved in vacuolar uptake of basic amino acids for storage during nitrogen replete condititions. May function as an amino acid/proton antiporter. This is Vacuolar basic amino acid transporter VSB1 from Saccharomyces cerevisiae (strain ATCC 204508 / S288c) (Baker's yeast).